A 617-amino-acid polypeptide reads, in one-letter code: Tetratricopeptide repeat protein 39B (617 aa).

TPR repeat units follow at residues 328 to 361 (SLILFYHARIELLKGNTEKAQETFRKCISVQEEW), 520 to 553 (CLVKLLKGCCLKNLERPLQAELCFNHVVESEKLL), and 561 to 594 (PFTLFELAFLYKSQGEIDKAIKVLETARNNYKDY).

This sequence belongs to the TTC39 family. High expression in lung and spleen. Low lower expression in liver and small intestine. Weak expression in heart, brain, kidney, adipose, and adrenal gland.

Its function is as follows. Regulates high density lipoprotein (HDL) cholesterol metabolism by promoting the ubiquitination and degradation of the oxysterols receptors LXR (NR1H2 and NR1H3). The polypeptide is Tetratricopeptide repeat protein 39B (Mus musculus (Mouse)).